The sequence spans 583 residues: PTS system lactose-specific EIICB component (583 aa).

The PTS EIIC type-3 domain maps to 8 to 409; it reads IEKGKPFFEK…VVDVMIYYPF (402 aa). 9 consecutive transmembrane segments (helical) span residues 30–50, 64–84, 103–123, 137–157, 176–196, 222–242, 283–303, 339–359, and 381–401; these read GFIAAIPIILFSSIFILITYV, GILMKPYNYTMGIVGLIVAGT, INFISTMMAAMSGFLFLAADP, KGLLTAFISAFITVIVYNFFI, VFKDIFPLSAVIIIIYALDLL, GWIGVTLIFGAFAFFWFVGIH, FVATMGGTGATLVVPFMFMWL, VFFIPFIFAPIVNVWIFKFFV, and IVMGTGFAFWSFVLAIVLIVV. Over residues 453–462 the composition is skewed to low complexity; it reads ANETTTTESA. The disordered stretch occupies residues 453–475; the sequence is ANETTTTESAPSDEEVSAKNSSN. In terms of domain architecture, PTS EIIB type-3 spans 480 to 583; sequence QTNVLVLCAG…LDFVQQQFEK (104 aa). The active-site Phosphocysteine intermediate; for EIIB activity is the Cys-487. At Cys-487 the chain carries Phosphocysteine; by EIIA.

The protein resides in the cell membrane. The catalysed reaction is lactose(out) + N(pros)-phospho-L-histidyl-[protein] = lactose 6-phosphate(in) + L-histidyl-[protein]. Its function is as follows. The phosphoenolpyruvate-dependent sugar phosphotransferase system (sugar PTS), a major carbohydrate active transport system, catalyzes the phosphorylation of incoming sugar substrates concomitantly with their translocation across the cell membrane. The enzyme II LacEF PTS system is involved in lactose transport. This Staphylococcus haemolyticus (strain JCSC1435) protein is PTS system lactose-specific EIICB component.